Here is a 702-residue protein sequence, read N- to C-terminus: MKKVRFIFLALLFFLASPEGAMASDGTWQGKQYLKEDGSQAANEWVFDTHYQSWFYIKADANYAENEWLKQGDDYFYLKSGGYMAKSEWVEDKGAFYYLDQDGKMKRNAWVGTSYVGATGAKVIEDWVYDSQYDAWFYIKADGQHAEKEWLQIKGKDYYFKSGGYLLTSQWINQAYVNASGAKVQQGWLFDKQYQSWFYIKENGNYADKEWIFENGHYYYLKSGGYMAANEWIWDKESWFYLKFDGKIAEKEWVYDSHSQAWYYFKSGGYMAANEWIWDKESWFYLKFDGKMAEKEWVYDSHSQAWYYFKSGGYMTANEWIWDKESWFYLKSDGKIAEKEWVYDSHSQAWYYFKSGGYMTANEWIWDKESWFYLKSDGKMAEKEWVYDSHSQAWYYFKSGGYMAKNETVDGYQLGSDGKWLGGKATNKNAAYYQVVPVTANVYDSDGEKLSYISQGSVVWLDKDRKSDDKRLAITISGLSGYMKTEDLQALDASKDFIPYYESDGHRFYHYVAQNASIPVASHLSDMEVGKKYYSADGLHFDGFKLENPFLFKDLTEATNYSAEELDKVFSLLNINNSLLENKGATFKEAEEHYHINALYLLAHSALESNWGRSKIAKDKNNFFGITAYDTTPYLSAKTFDDVDKGILGATKWIKENYIDRGRTFLGNKASGMNVEYASDPYWGEKIASVMMKINEKLGGKD.

Residues 1–23 form the signal peptide; it reads MKKVRFIFLALLFFLASPEGAMA. 15 Cell wall-binding repeats span residues 42–63, 65–84, 86–105, 124–145, 147–166, 185–206, 208–227, 229–248, 250–271, 273–292, 294–315, 317–336, 338–359, 361–380, and 382–403; these read ANEW…DANY, ENEW…GGYM, KSEW…DGKM, IEDW…DGQH, EKEW…GGYL, QQGW…NGNY, DKEW…GGYM, ANEW…DGKI, EKEW…GGYM, and ANEW…DGKM.

It belongs to the glycosyl hydrolase 73 family.

The protein resides in the secreted. The enzyme catalyses an N(4)-(oligosaccharide-(1-&gt;3)-[oligosaccharide-(1-&gt;6)]-beta-D-Man-(1-&gt;4)-beta-D-GlcNAc-(1-&gt;4)-alpha-D-GlcNAc)-L-asparaginyl-[protein] + H2O = an oligosaccharide-(1-&gt;3)-[oligosaccharide-(1-&gt;6)]-beta-D-Man-(1-&gt;4)-D-GlcNAc + N(4)-(N-acetyl-beta-D-glucosaminyl)-L-asparaginyl-[protein]. Functionally, plays an important role in cell wall degradation and cell separation. In Streptococcus pneumoniae (strain ATCC BAA-255 / R6), this protein is Putative endo-beta-N-acetylglucosaminidase (lytB).